We begin with the raw amino-acid sequence, 80 residues long: Omega-conotoxin-like PuIA (80 aa).

A signal peptide spans methionine 1–alanine 22. The propeptide occupies aspartate 23–arginine 50. Disulfide bonds link cysteine 52-cysteine 70, cysteine 59-cysteine 74, and cysteine 69-cysteine 78.

It belongs to the conotoxin O1 superfamily. As to expression, expressed by the venom duct.

Its subcellular location is the secreted. Its function is as follows. Omega-conotoxins act at presynaptic membranes, they bind and block voltage-gated calcium channels (Cav). This chain is Omega-conotoxin-like PuIA, found in Conus pulicarius (Flea-bitten cone).